The primary structure comprises 274 residues: Nitrogenase iron protein (274 aa).

8–15 (GKGGIGKS) contributes to the ATP binding site. C94 is a [4Fe-4S] cluster binding site. R97 carries the ADP-ribosylarginine; by dinitrogenase reductase ADP-ribosyltransferase modification. Position 131 (C131) interacts with [4Fe-4S] cluster.

The protein belongs to the NifH/BchL/ChlL family. Homodimer. Requires [4Fe-4S] cluster as cofactor. The reversible ADP-ribosylation of Arg-97 inactivates the nitrogenase reductase and regulates nitrogenase activity.

It catalyses the reaction N2 + 8 reduced [2Fe-2S]-[ferredoxin] + 16 ATP + 16 H2O = H2 + 8 oxidized [2Fe-2S]-[ferredoxin] + 2 NH4(+) + 16 ADP + 16 phosphate + 6 H(+). Functionally, the key enzymatic reactions in nitrogen fixation are catalyzed by the nitrogenase complex, which has 2 components: the iron protein and the molybdenum-iron protein. This is Nitrogenase iron protein from Chlorobium limicola (strain DSM 245 / NBRC 103803 / 6330).